The following is a 200-amino-acid chain: Putative peroxiredoxin sll0755 (200 aa).

The Thioredoxin domain maps to 5–163; sequence LRVGQPAPDF…TLRVLKAIRH (159 aa). Cys50 functions as the Cysteine sulfenic acid (-SOH) intermediate in the catalytic mechanism.

It belongs to the peroxiredoxin family. AhpC/Prx1 subfamily. In terms of assembly, homodimer; disulfide-linked, upon oxidation.

Its subcellular location is the cytoplasm. The catalysed reaction is a hydroperoxide + [thioredoxin]-dithiol = an alcohol + [thioredoxin]-disulfide + H2O. In terms of biological role, thiol-specific peroxidase that catalyzes the reduction of hydrogen peroxide and organic hydroperoxides to water and alcohols, respectively. Plays a role in cell protection against oxidative stress by detoxifying peroxides. This chain is Putative peroxiredoxin sll0755, found in Synechocystis sp. (strain ATCC 27184 / PCC 6803 / Kazusa).